Reading from the N-terminus, the 189-residue chain is MERNEVAPGMLLVAAPDMASEDFERSIVLIIEHSPATTFGVNISSRSDVAVANVLPEWVDLTSKPQALYIGGPLSQQAVVGLGVTKPGVDIENSTSFNKLANRLVHVDLRSAPEDVADDLEGMRFFAGYAEWAPGQLNEEIEQGDWFVTPALPSDIIAPGRVDIWGDVMRRQAMPLPLYSTFPSDPSDN.

Belongs to the UPF0301 (AlgH) family.

The polypeptide is UPF0301 protein Cgl3084/cg3414 (Corynebacterium glutamicum (strain ATCC 13032 / DSM 20300 / JCM 1318 / BCRC 11384 / CCUG 27702 / LMG 3730 / NBRC 12168 / NCIMB 10025 / NRRL B-2784 / 534)).